Reading from the N-terminus, the 140-residue chain is Small ribosomal subunit protein uS19 (140 aa).

The protein belongs to the universal ribosomal protein uS19 family.

In terms of biological role, protein S19 forms a complex with S13 that binds strongly to the 16S ribosomal RNA. This is Small ribosomal subunit protein uS19 (rps19) from Saccharolobus solfataricus (strain ATCC 35092 / DSM 1617 / JCM 11322 / P2) (Sulfolobus solfataricus).